Consider the following 125-residue polypeptide: Acyl carrier protein, mitochondrial (125 aa).

Residues 1–36 constitute a mitochondrion transit peptide; the sequence is MFRSVCRISSRVAPSAYRTIMGRSVMSNTILAQRFY. In terms of domain architecture, Carrier spans 43-122; sequence DQVSQRVIDV…ETVDYIASNP (80 aa). The residue at position 82 (Ser82) is an O-(pantetheine 4'-phosphoryl)serine.

The protein belongs to the acyl carrier protein (ACP) family. As to quaternary structure, complex I is composed of about 30 different subunits. Post-translationally, 4'-phosphopantetheine is transferred from CoA to a specific serine of apo-ACP by acpS. This modification is essential for activity because fatty acids are bound in thioester linkage to the sulfhydryl of the prosthetic group.

It is found in the mitochondrion. It functions in the pathway lipid metabolism; fatty acid biosynthesis. Its function is as follows. Carrier of the growing fatty acid chain in fatty acid biosynthesis. May be involved in the synthesis of very-long-chain fatty acids. Accessory and non-catalytic subunit of the mitochondrial membrane respiratory chain NADH dehydrogenase (Complex I), which functions in the transfer of electrons from NADH to the respiratory chain. This Saccharomyces cerevisiae (strain ATCC 204508 / S288c) (Baker's yeast) protein is Acyl carrier protein, mitochondrial (ACP1).